Consider the following 119-residue polypeptide: Large ribosomal subunit protein uL22c (119 aa).

This sequence belongs to the universal ribosomal protein uL22 family. As to quaternary structure, part of the 50S ribosomal subunit.

The protein resides in the plastid. It localises to the chloroplast. Its function is as follows. This protein binds specifically to 23S rRNA. In terms of biological role, the globular domain of the protein is located near the polypeptide exit tunnel on the outside of the subunit, while an extended beta-hairpin is found that lines the wall of the exit tunnel in the center of the 70S ribosome. The polypeptide is Large ribosomal subunit protein uL22c (rpl22) (Chlorokybus atmophyticus (Soil alga)).